The chain runs to 159 residues: Large ribosomal subunit protein uL10 (159 aa).

It belongs to the universal ribosomal protein uL10 family. As to quaternary structure, part of the ribosomal stalk of the 50S ribosomal subunit. The N-terminus interacts with L11 and the large rRNA to form the base of the stalk. The C-terminus forms an elongated spine to which L12 dimers bind in a sequential fashion forming a multimeric L10(L12)X complex.

Its function is as follows. Forms part of the ribosomal stalk, playing a central role in the interaction of the ribosome with GTP-bound translation factors. This Campylobacter jejuni (strain RM1221) protein is Large ribosomal subunit protein uL10.